A 621-amino-acid polypeptide reads, in one-letter code: Elongation factor 4 (621 aa).

The 183-residue stretch at 21–203 folds into the tr-type G domain; sequence DLIRNICIIA…AIVKRVPPPK (183 aa). Residues 33 to 38 and 150 to 153 contribute to the GTP site; these read DHGKTT and NKID.

It belongs to the TRAFAC class translation factor GTPase superfamily. Classic translation factor GTPase family. LepA subfamily.

It is found in the cell inner membrane. The enzyme catalyses GTP + H2O = GDP + phosphate + H(+). Required for accurate and efficient protein synthesis under certain stress conditions. May act as a fidelity factor of the translation reaction, by catalyzing a one-codon backward translocation of tRNAs on improperly translocated ribosomes. Back-translocation proceeds from a post-translocation (POST) complex to a pre-translocation (PRE) complex, thus giving elongation factor G a second chance to translocate the tRNAs correctly. Binds to ribosomes in a GTP-dependent manner. The sequence is that of Elongation factor 4 from Thermotoga maritima (strain ATCC 43589 / DSM 3109 / JCM 10099 / NBRC 100826 / MSB8).